The following is a 428-amino-acid chain: Ribulose bisphosphate carboxylase (428 aa).

The active-site Proton acceptor is Lys151. Lys153 is a substrate binding site. Mg(2+) is bound by residues Lys177, Asp179, and Glu180. Lys177 bears the N6-carboxylysine mark. Catalysis depends on His270, which acts as the Proton acceptor. Substrate-binding positions include Arg271, His303, 354–356, and 376–379; these read SGG and QFGG.

This sequence belongs to the RuBisCO large chain family. Type III subfamily. In terms of assembly, homodimer or homodecamer. In contrast to form I RuBisCO, the form III RuBisCO is composed solely of large subunits. Mg(2+) serves as cofactor.

The enzyme catalyses 2 (2R)-3-phosphoglycerate + 2 H(+) = D-ribulose 1,5-bisphosphate + CO2 + H2O. The catalysed reaction is D-ribulose 1,5-bisphosphate + O2 = 2-phosphoglycolate + (2R)-3-phosphoglycerate + 2 H(+). Catalyzes the addition of molecular CO(2) and H(2)O to ribulose 1,5-bisphosphate (RuBP), generating two molecules of 3-phosphoglycerate (3-PGA). Functions in an archaeal AMP degradation pathway, together with AMP phosphorylase and R15P isomerase. The polypeptide is Ribulose bisphosphate carboxylase (Methanosarcina barkeri (strain Fusaro / DSM 804)).